We begin with the raw amino-acid sequence, 363 residues long: Lactose transport ATP-binding protein LacK (363 aa).

The ABC transporter domain maps to 4–234 (VRLTDIRKSY…PDNMFVAGFI (231 aa)). 36-43 (GPSGCGKS) serves as a coordination point for ATP.

It belongs to the ABC transporter superfamily.

It localises to the cell inner membrane. Its function is as follows. Part of the binding-protein-dependent transport system for lactose. Probably responsible for energy coupling to the transport system. This Rhizobium radiobacter (Agrobacterium tumefaciens) protein is Lactose transport ATP-binding protein LacK (lacK).